The following is a 215-amino-acid chain: Outer membrane protein assembly factor BamC homolog (215 aa).

The signal sequence occupies residues 1 to 16; it reads MKKIILNLVTAIILAG. C17 carries N-palmitoyl cysteine lipidation. A lipid anchor (S-diacylglycerol cysteine) is attached at C17.

It belongs to the BamC family.

The protein resides in the cell outer membrane. In Haemophilus influenzae (strain ATCC 51907 / DSM 11121 / KW20 / Rd), this protein is Outer membrane protein assembly factor BamC homolog.